Consider the following 155-residue polypeptide: Small ribosomal subunit protein uS7 (155 aa).

This sequence belongs to the universal ribosomal protein uS7 family. As to quaternary structure, part of the 30S ribosomal subunit. Contacts proteins S9 and S11.

Its function is as follows. One of the primary rRNA binding proteins, it binds directly to 16S rRNA where it nucleates assembly of the head domain of the 30S subunit. Is located at the subunit interface close to the decoding center, probably blocks exit of the E-site tRNA. In Helicobacter hepaticus (strain ATCC 51449 / 3B1), this protein is Small ribosomal subunit protein uS7.